The sequence spans 220 residues: Putative 3-methyladenine DNA glycosylase (220 aa).

It belongs to the DNA glycosylase MPG family.

The protein is Putative 3-methyladenine DNA glycosylase of Rickettsia bellii (strain RML369-C).